Reading from the N-terminus, the 61-residue chain is Double gene block protein 1 (61 aa).

Residues 1 to 45 are disordered; sequence MDIESEVPVVGKQMLAGNRGKQKTRRSVAKDAIRKPASDSTNGGN. The segment at 17–35 is RNA-binding; it reads GNRGKQKTRRSVAKDAIRK. Basic and acidic residues predominate over residues 28 to 37; that stretch reads VAKDAIRKPA.

Belongs to the carmovirus double gene block protein 1 family. In terms of assembly, homodimer.

Cell-to-cell movement. Displays RNA-binding activity. The protein is Double gene block protein 1 of Carnation mottle virus (CarMV).